The sequence spans 322 residues: uncharacterized protein (322 aa).

The segment covering methionine 1 to glutamate 13 has biased composition (polar residues). Disordered stretches follow at residues methionine 1–glutamate 94 and arginine 125–glutamate 322. Residues glycine 14–threonine 31 are compositionally biased toward low complexity. Residues glutamine 32 to threonine 50 show a composition bias toward polar residues. Acidic residues predominate over residues glutamate 64–glutamate 75. Basic and acidic residues-rich tracts occupy residues glycine 141–aspartate 227, arginine 235–aspartate 269, arginine 277–aspartate 295, and alanine 308–glutamate 322.

This is an uncharacterized protein from Deinococcus radiodurans (strain ATCC 13939 / DSM 20539 / JCM 16871 / CCUG 27074 / LMG 4051 / NBRC 15346 / NCIMB 9279 / VKM B-1422 / R1).